Consider the following 432-residue polypeptide: Enolase (432 aa).

Gln167 contacts (2R)-2-phosphoglycerate. Catalysis depends on Glu209, which acts as the Proton donor. Mg(2+) is bound by residues Asp246, Glu290, and Asp317. (2R)-2-phosphoglycerate-binding residues include Lys342, Arg371, Ser372, and Lys393. Lys342 functions as the Proton acceptor in the catalytic mechanism.

It belongs to the enolase family. Component of the RNA degradosome, a multiprotein complex involved in RNA processing and mRNA degradation. The cofactor is Mg(2+).

It localises to the cytoplasm. Its subcellular location is the secreted. It is found in the cell surface. The catalysed reaction is (2R)-2-phosphoglycerate = phosphoenolpyruvate + H2O. Its pathway is carbohydrate degradation; glycolysis; pyruvate from D-glyceraldehyde 3-phosphate: step 4/5. Functionally, catalyzes the reversible conversion of 2-phosphoglycerate (2-PG) into phosphoenolpyruvate (PEP). It is essential for the degradation of carbohydrates via glycolysis. The sequence is that of Enolase from Salmonella agona (strain SL483).